The chain runs to 359 residues: Aflatoxin B1 aldehyde reductase member 2 (359 aa).

The transit peptide at 1–38 directs the protein to the mitochondrion; it reads MLSAASRVVSRAAVHCALRSPPPEARALAMSRPPPPRV. Phosphoserine is present on Ser40. NADP(+) is bound at residue Asp72. Tyr77 acts as the Proton donor in catalysis. Lys128 carries the N6-acetyllysine modification. His141 lines the substrate pocket. Residues 171 to 172, Gln197, 226 to 236, and Arg250 contribute to the NADP(+) site; these read SN and NPLAGGLLTGK. At Lys236 the chain carries N6-succinyllysine. Ser255 is subject to Phosphoserine. Positions 260 and 263 each coordinate substrate. 318–326 contributes to the NADP(+) binding site; that stretch reads SSLEQLEQN. Arg359 provides a ligand contact to substrate.

The protein belongs to the aldo/keto reductase family. Aldo/keto reductase 2 subfamily. Homodimer. In terms of tissue distribution, detected in brain, liver, small intestine and testis, and at lower levels in heart, prostate, skeletal muscle and spleen. Detected in kidney proximal and distal tubules, endothelial cells lining the Bowman's capsules and some cysts. Detected at low levels in lung and pancreas (at protein level). Widely expressed.

It is found in the mitochondrion. The protein resides in the golgi apparatus. Its subcellular location is the cytoplasm. It carries out the reaction 4-hydroxybutanoate + NADP(+) = succinate semialdehyde + NADPH + H(+). Catalyzes the NADPH-dependent reduction of succinic semialdehyde to gamma-hydroxybutyrate. May have an important role in producing the neuromodulator gamma-hydroxybutyrate (GHB). Has broad substrate specificity. Has NADPH-dependent aldehyde reductase activity towards 2-carboxybenzaldehyde, 2-nitrobenzaldehyde and pyridine-2-aldehyde (in vitro). Can reduce 1,2-naphthoquinone and 9,10-phenanthrenequinone (in vitro). Can reduce the dialdehyde protein-binding form of aflatoxin B1 (AFB1) to the non-binding AFB1 dialcohol. May be involved in protection of liver against the toxic and carcinogenic effects of AFB1, a potent hepatocarcinogen. The sequence is that of Aflatoxin B1 aldehyde reductase member 2 (AKR7A2) from Homo sapiens (Human).